A 337-amino-acid chain; its full sequence is 5-formaminoimidazole-4-carboxamide-1-(beta)-D-ribofuranosyl 5'-monophosphate synthetase (337 aa).

Residues histidine 23 and serine 87 each coordinate 5-amino-1-(5-phospho-beta-D-ribosyl)imidazole-4-carboxamide. One can recognise an ATP-grasp domain in the interval 121–328 (MRLLEYAGIP…IAHEIVNAVK (208 aa)). ATP-binding positions include 144-191 (PVIV…VPAY) and glutamate 213. Residue asparagine 233 coordinates 5-amino-1-(5-phospho-beta-D-ribosyl)imidazole-4-carboxamide. Glutamate 272 and glutamate 285 together coordinate Mg(2+).

It belongs to the phosphohexose mutase family. It depends on Mg(2+) as a cofactor. The cofactor is Mn(2+).

The enzyme catalyses 5-amino-1-(5-phospho-beta-D-ribosyl)imidazole-4-carboxamide + formate + ATP = 5-formamido-1-(5-phospho-D-ribosyl)imidazole-4-carboxamide + ADP + phosphate. Its pathway is purine metabolism; IMP biosynthesis via de novo pathway; 5-formamido-1-(5-phospho-D-ribosyl)imidazole-4-carboxamide from 5-amino-1-(5-phospho-D-ribosyl)imidazole-4-carboxamide (formate route): step 1/1. Its function is as follows. Catalyzes the ATP- and formate-dependent formylation of 5-aminoimidazole-4-carboxamide-1-beta-d-ribofuranosyl 5'-monophosphate (AICAR) to 5-formaminoimidazole-4-carboxamide-1-beta-d-ribofuranosyl 5'-monophosphate (FAICAR) in the absence of folates. This Caldivirga maquilingensis (strain ATCC 700844 / DSM 13496 / JCM 10307 / IC-167) protein is 5-formaminoimidazole-4-carboxamide-1-(beta)-D-ribofuranosyl 5'-monophosphate synthetase.